A 213-amino-acid chain; its full sequence is Orotate phosphoribosyltransferase (213 aa).

Lysine 26 serves as a coordination point for 5-phospho-alpha-D-ribose 1-diphosphate. 34–35 (FF) contacts orotate. 5-phospho-alpha-D-ribose 1-diphosphate contacts are provided by residues 72–73 (YK), arginine 99, lysine 100, lysine 103, histidine 105, and 124–132 (DDVITAGTA). Residues threonine 128 and arginine 156 each coordinate orotate.

The protein belongs to the purine/pyrimidine phosphoribosyltransferase family. PyrE subfamily. In terms of assembly, homodimer. Requires Mg(2+) as cofactor.

The catalysed reaction is orotidine 5'-phosphate + diphosphate = orotate + 5-phospho-alpha-D-ribose 1-diphosphate. It participates in pyrimidine metabolism; UMP biosynthesis via de novo pathway; UMP from orotate: step 1/2. Catalyzes the transfer of a ribosyl phosphate group from 5-phosphoribose 1-diphosphate to orotate, leading to the formation of orotidine monophosphate (OMP). This chain is Orotate phosphoribosyltransferase, found in Pseudomonas savastanoi pv. phaseolicola (strain 1448A / Race 6) (Pseudomonas syringae pv. phaseolicola (strain 1448A / Race 6)).